Consider the following 241-residue polypeptide: ATP synthase subunit a (241 aa).

Helical transmembrane passes span 30 to 50 (GQIFLSSWILIGALLAFVLVG), 89 to 109 (LPFIGTLFLFIFVSNWGGALI), 128 to 148 (INTTVAMALLVTLAYFYAGLS), 193 to 213 (LAVGVLVYLVPLIVPLPVMLL), and 214 to 234 (GLFTSAIQALIFATLAAFYIG).

Belongs to the ATPase A chain family. In terms of assembly, F-type ATPases have 2 components, CF(1) - the catalytic core - and CF(0) - the membrane proton channel. CF(1) has five subunits: alpha(3), beta(3), gamma(1), delta(1), epsilon(1). CF(0) has four main subunits: a, b, b' and c.

It localises to the cellular thylakoid membrane. Key component of the proton channel; it plays a direct role in the translocation of protons across the membrane. This is ATP synthase subunit a from Synechococcus sp. (strain CC9311).